A 228-amino-acid polypeptide reads, in one-letter code: Cytochrome b5 domain-containing protein 1 (228 aa).

The region spanning 17–83 is the Cytochrome b5 heme-binding domain; it reads RRYFTPAEVA…DPKTRDIRKH (67 aa). Residues Y52 and H83 each contribute to the heme site.

The protein belongs to the cytochrome b5 family.

It localises to the cytoplasm. The protein resides in the cytoskeleton. It is found in the cilium axoneme. Radial spoke stalk protein that binds heme under oxidizing conditions. Required for the coordinated beating of multiple cilia maybe by functioning in a redox signaling pathway. In Homo sapiens (Human), this protein is Cytochrome b5 domain-containing protein 1.